The following is a 1050-amino-acid chain: MIKETEQIPGPRPLPVVGNLFDMDLEHGLECLIRLADDFGPLFQITINGEKQIFATSQALVDELCDESRFHKAVMGGLEKLRMLASDGLFTAYHGERGWGIAHRILVPAFGPLRIRNMFEEMNDVAQQLCLKWARQGSSTSINITDDFTRLTLDTIALCTMNFRLNSFYNNETMHPFVKSMLYVLRESDIQSMLPGIANCIRVKARSRMSKHIQLMRNMARGIIQERRDQAEPVDDLLNTLLNGRDPVTGEGMSDDLIINNVITFLIAGHETTSGLLSFTFYYLLQNPHILERAQNEVDEVTGGERITVQHLGRLTYIDAILKESLRLMPTAPAFTVTPKKPEVLGGAWAIDAGQAVNVLLPVCLRDRSVFGPDADEFRPERMLEENFSKLPPNSWKPFGNGERSCIGRAFAWQEAQLVVAMVLQTFDLVPDDPSYKLRIKETLTIKPDGFRVRATLRRGQSATGLSQGSMSASGATSSVASPGPPAATGAQSNPAGGQRISFFYGSNSGTCKALAHRLASSLMGRGFTEQKLAALDTVVGNLPTDQPVIIVTTSYDGRPTDDAEEFVRWLESKRPVLQGVSYAVFGCGHHDWAKTFYRIPILIDDLMHKAGATRLTALGTANAAVSDLFSDLELWEETNLLPALREAFPPSNSSDVESSEPHQLQICVSKPRRVDMHRGLVEAKVTAVRTLTSPDSPEKRHVEFHVQGDTTWRPGDHVNILPVNPLSTVSRVLAYFQLAPDHSITVNSFNTQGLPSATPVSATELFSSFVELSQPATRKNLKALAMAAESKTDEQELIRLHDSYDALVRDKRVSVLDILERFPSISLPIGIFISMLPPLRLRTYSLSMAPSFKPSHGSLTFSVINEPAWSGNGQYLGVGSNYLASLTPGSLLYLSPRPAKDAFHLPADQFNTPIIMICAGSGLAPFMGFIQERMTWLKQGRPLAKGLLFFGCRGPHLDDLYYEELSEFEDAGVVEVHRAYSRAPDDVRAKGCRHVQHRLVTEAEAVRDHWGRNAIVYVCGSSNMARGVQTVLEEILGTLPPERYVAEIF.

Residue Cys-406 participates in heme binding. Residues 459 to 481 (RGQSATGLSQGSMSASGATSSVA) show a composition bias toward polar residues. Residues 459–495 (RGQSATGLSQGSMSASGATSSVASPGPPAATGAQSNP) are disordered. Positions 501–641 (ISFFYGSNSG…DLELWEETNL (141 aa)) constitute a Flavodoxin-like domain. FMN-binding positions include 507 to 511 (SNSGT) and 585 to 617 (VFGC…TRLT). In terms of domain architecture, FAD-binding FR-type spans 679 to 907 (RGLVEAKVTA…RPAKDAFHLP (229 aa)).

In the N-terminal section; belongs to the cytochrome P450 family. FAD serves as cofactor. The cofactor is FMN. It depends on heme as a cofactor.

The catalysed reaction is 2 oxidized [cytochrome P450] + NADPH = 2 reduced [cytochrome P450] + NADP(+) + H(+). The enzyme catalyses an organic molecule + reduced [NADPH--hemoprotein reductase] + O2 = an alcohol + oxidized [NADPH--hemoprotein reductase] + H2O + H(+). It catalyses the reaction decane + reduced [NADPH--hemoprotein reductase] + O2 = 3-decanol + oxidized [NADPH--hemoprotein reductase] + H2O + H(+). It carries out the reaction dodecane + reduced [NADPH--hemoprotein reductase] + O2 = 5-dodecanol + oxidized [NADPH--hemoprotein reductase] + H2O + H(+). The catalysed reaction is tetradecane + reduced [NADPH--hemoprotein reductase] + O2 = 7-tetradecanol + oxidized [NADPH--hemoprotein reductase] + H2O + H(+). The enzyme catalyses hexadecane + reduced [NADPH--hemoprotein reductase] + O2 = 9-hexadecanol + oxidized [NADPH--hemoprotein reductase] + H2O + H(+). It catalyses the reaction dodecanoate + reduced [NADPH--hemoprotein reductase] + O2 = 5-hydroxydodecanoate + oxidized [NADPH--hemoprotein reductase] + H2O + H(+). It carries out the reaction tetradecanoate + reduced [NADPH--hemoprotein reductase] + O2 = 7-hydroxytetradecanoate + oxidized [NADPH--hemoprotein reductase] + H2O + H(+). The catalysed reaction is hexadecanoate + reduced [NADPH--hemoprotein reductase] + O2 = 9-hydroxyhexadecanoate + oxidized [NADPH--hemoprotein reductase] + H2O + H(+). The enzyme catalyses decan-1-ol + reduced [NADPH--hemoprotein reductase] + O2 = 1,3-decanediol + oxidized [NADPH--hemoprotein reductase] + H2O + H(+). It catalyses the reaction decan-1-ol + reduced [NADPH--hemoprotein reductase] + O2 = 1,7-decanediol + oxidized [NADPH--hemoprotein reductase] + H2O + H(+). It carries out the reaction dodecan-1-ol + reduced [NADPH--hemoprotein reductase] + O2 = 1,5-dodecanediol + oxidized [NADPH--hemoprotein reductase] + H2O + H(+). The catalysed reaction is dodecan-1-ol + reduced [NADPH--hemoprotein reductase] + O2 = 1,4-dodecanediol + oxidized [NADPH--hemoprotein reductase] + H2O + H(+). The enzyme catalyses dodecan-1-ol + reduced [NADPH--hemoprotein reductase] + O2 = 1,6-dodecanediol + oxidized [NADPH--hemoprotein reductase] + H2O + H(+). Functionally, self-sufficient cytochrome P450 monooxygenase that catalyzes the regioselective in-chain hydroxylation of alkanes, fatty alcohols, and fatty acids at the omega-7 position. Performs hydroxylation of C10-C16 n-alkanes and C12 and C14 fatty alcohols; and thereby enables the one step biocatalytic synthesis of rare alcohols such as 5-dodecanol and 7-tetradecanol. Converts 1-dodecanol into 1,5-dodecanediol as major product with very little sub-terminally hydroxylated products with the 1,4-dodecanediol and 1,6-dodecanediol more abundant. Does not use hexadecanediol nor decanoic acid as substrates. Converts dodecanoic acid to 5-hydroxydodecanoic acid which can be further converted into delta-dodecalactone by lactonization of the 5-hydroxy acid at low pH. Also gives sub-terminal hydroxylation of dodecanoic acid with 9-hydroxydodecanoic acid being the second most abundant product. The C14 and C16 fatty acids are double hydroxylated to yield dihydroxy acids hydroxylated at both the omega-7 position and a sub-terminal position (omega-1, omega-2, or omega-3). The protein is Self-sufficient cytochrome P450 monooxygenase CYP505E3 of Aspergillus terreus (strain NIH 2624 / FGSC A1156).